The primary structure comprises 246 residues: 1-(5-phosphoribosyl)-5-[(5-phosphoribosylamino)methylideneamino] imidazole-4-carboxamide isomerase (246 aa).

Asp7 (proton acceptor) is an active-site residue. Catalysis depends on Asp130, which acts as the Proton donor.

This sequence belongs to the HisA/HisF family.

Its subcellular location is the cytoplasm. The catalysed reaction is 1-(5-phospho-beta-D-ribosyl)-5-[(5-phospho-beta-D-ribosylamino)methylideneamino]imidazole-4-carboxamide = 5-[(5-phospho-1-deoxy-D-ribulos-1-ylimino)methylamino]-1-(5-phospho-beta-D-ribosyl)imidazole-4-carboxamide. Its pathway is amino-acid biosynthesis; L-histidine biosynthesis; L-histidine from 5-phospho-alpha-D-ribose 1-diphosphate: step 4/9. The chain is 1-(5-phosphoribosyl)-5-[(5-phosphoribosylamino)methylideneamino] imidazole-4-carboxamide isomerase from Sodalis glossinidius (strain morsitans).